We begin with the raw amino-acid sequence, 363 residues long: Holliday junction branch migration complex subunit RuvB (363 aa).

Residues 1-23 (MHKDEDQRLLGPAPLPNDPDRSL) are disordered. Residues 1–184 (MHKDEDQRLL…FGIPIRLNFY (184 aa)) form a large ATPase domain (RuvB-L) region. ATP-binding positions include Leu-23, Arg-24, Gly-65, Lys-68, Thr-69, Thr-70, 131–133 (EDY), Arg-174, Tyr-184, and Arg-221. Mg(2+) is bound at residue Thr-69. The tract at residues 185-255 (TIEELEYIVQ…IADEALSRLE (71 aa)) is small ATPAse domain (RuvB-S). The head domain (RuvB-H) stretch occupies residues 258 to 363 (HLGLDPLDRR…QTTLWDGEDD (106 aa)). Positions 294, 313, and 318 each coordinate DNA.

It belongs to the RuvB family. In terms of assembly, homohexamer. Forms an RuvA(8)-RuvB(12)-Holliday junction (HJ) complex. HJ DNA is sandwiched between 2 RuvA tetramers; dsDNA enters through RuvA and exits via RuvB. An RuvB hexamer assembles on each DNA strand where it exits the tetramer. Each RuvB hexamer is contacted by two RuvA subunits (via domain III) on 2 adjacent RuvB subunits; this complex drives branch migration. In the full resolvosome a probable DNA-RuvA(4)-RuvB(12)-RuvC(2) complex forms which resolves the HJ.

Its subcellular location is the cytoplasm. The catalysed reaction is ATP + H2O = ADP + phosphate + H(+). Its function is as follows. The RuvA-RuvB-RuvC complex processes Holliday junction (HJ) DNA during genetic recombination and DNA repair, while the RuvA-RuvB complex plays an important role in the rescue of blocked DNA replication forks via replication fork reversal (RFR). RuvA specifically binds to HJ cruciform DNA, conferring on it an open structure. The RuvB hexamer acts as an ATP-dependent pump, pulling dsDNA into and through the RuvAB complex. RuvB forms 2 homohexamers on either side of HJ DNA bound by 1 or 2 RuvA tetramers; 4 subunits per hexamer contact DNA at a time. Coordinated motions by a converter formed by DNA-disengaged RuvB subunits stimulates ATP hydrolysis and nucleotide exchange. Immobilization of the converter enables RuvB to convert the ATP-contained energy into a lever motion, pulling 2 nucleotides of DNA out of the RuvA tetramer per ATP hydrolyzed, thus driving DNA branch migration. The RuvB motors rotate together with the DNA substrate, which together with the progressing nucleotide cycle form the mechanistic basis for DNA recombination by continuous HJ branch migration. Branch migration allows RuvC to scan DNA until it finds its consensus sequence, where it cleaves and resolves cruciform DNA. The sequence is that of Holliday junction branch migration complex subunit RuvB from Bartonella tribocorum (strain CIP 105476 / IBS 506).